The chain runs to 499 residues: Glutamyl-tRNA(Gln) amidotransferase subunit A (499 aa).

Residues K79 and S159 each act as charge relay system in the active site. Catalysis depends on S183, which acts as the Acyl-ester intermediate.

Belongs to the amidase family. GatA subfamily. Heterotrimer of A, B and C subunits.

The catalysed reaction is L-glutamyl-tRNA(Gln) + L-glutamine + ATP + H2O = L-glutaminyl-tRNA(Gln) + L-glutamate + ADP + phosphate + H(+). In terms of biological role, allows the formation of correctly charged Gln-tRNA(Gln) through the transamidation of misacylated Glu-tRNA(Gln) in organisms which lack glutaminyl-tRNA synthetase. The reaction takes place in the presence of glutamine and ATP through an activated gamma-phospho-Glu-tRNA(Gln). The polypeptide is Glutamyl-tRNA(Gln) amidotransferase subunit A (Granulibacter bethesdensis (strain ATCC BAA-1260 / CGDNIH1)).